Reading from the N-terminus, the 376-residue chain is UDP-N-acetylglucosamine--N-acetylmuramyl-(pentapeptide) pyrophosphoryl-undecaprenol N-acetylglucosamine transferase (376 aa).

UDP-N-acetyl-alpha-D-glucosamine-binding positions include 12 to 14 (TAG), asparagine 126, arginine 163, serine 198, and glutamine 296.

The protein belongs to the glycosyltransferase 28 family. MurG subfamily.

The protein localises to the cell membrane. The enzyme catalyses di-trans,octa-cis-undecaprenyl diphospho-N-acetyl-alpha-D-muramoyl-L-alanyl-D-glutamyl-meso-2,6-diaminopimeloyl-D-alanyl-D-alanine + UDP-N-acetyl-alpha-D-glucosamine = di-trans,octa-cis-undecaprenyl diphospho-[N-acetyl-alpha-D-glucosaminyl-(1-&gt;4)]-N-acetyl-alpha-D-muramoyl-L-alanyl-D-glutamyl-meso-2,6-diaminopimeloyl-D-alanyl-D-alanine + UDP + H(+). Its pathway is cell wall biogenesis; peptidoglycan biosynthesis. Its function is as follows. Cell wall formation. Catalyzes the transfer of a GlcNAc subunit on undecaprenyl-pyrophosphoryl-MurNAc-pentapeptide (lipid intermediate I) to form undecaprenyl-pyrophosphoryl-MurNAc-(pentapeptide)GlcNAc (lipid intermediate II). The polypeptide is UDP-N-acetylglucosamine--N-acetylmuramyl-(pentapeptide) pyrophosphoryl-undecaprenol N-acetylglucosamine transferase (Frankia casuarinae (strain DSM 45818 / CECT 9043 / HFP020203 / CcI3)).